A 197-amino-acid polypeptide reads, in one-letter code: Probable nicotinate-nucleotide adenylyltransferase (197 aa).

Belongs to the NadD family.

The catalysed reaction is nicotinate beta-D-ribonucleotide + ATP + H(+) = deamido-NAD(+) + diphosphate. The protein operates within cofactor biosynthesis; NAD(+) biosynthesis; deamido-NAD(+) from nicotinate D-ribonucleotide: step 1/1. Catalyzes the reversible adenylation of nicotinate mononucleotide (NaMN) to nicotinic acid adenine dinucleotide (NaAD). This chain is Probable nicotinate-nucleotide adenylyltransferase, found in Thermosipho melanesiensis (strain DSM 12029 / CIP 104789 / BI429).